The following is a 332-amino-acid chain: Diaminopimelate epimerase (332 aa).

The substrate site is built by Asn13 and Asn73. Residue Cys82 is the Proton donor of the active site. Residues 83 to 84, Asn172, Asn209, and 227 to 228 each bind substrate; these read GN and ER. Cys236 serves as the catalytic Proton acceptor. 237-238 contacts substrate; the sequence is GT.

Belongs to the diaminopimelate epimerase family. As to quaternary structure, homodimer.

It is found in the cytoplasm. It carries out the reaction (2S,6S)-2,6-diaminopimelate = meso-2,6-diaminopimelate. Its pathway is amino-acid biosynthesis; L-lysine biosynthesis via DAP pathway; DL-2,6-diaminopimelate from LL-2,6-diaminopimelate: step 1/1. In terms of biological role, catalyzes the stereoinversion of LL-2,6-diaminopimelate (L,L-DAP) to meso-diaminopimelate (meso-DAP), a precursor of L-lysine and an essential component of the bacterial peptidoglycan. The sequence is that of Diaminopimelate epimerase from Lactiplantibacillus plantarum (strain ATCC BAA-793 / NCIMB 8826 / WCFS1) (Lactobacillus plantarum).